The sequence spans 211 residues: Large ribosomal subunit protein bL25 (211 aa).

The interval 188–211 is disordered; it reads HREEEKAPEETGEAAPAPTPETGQ. Residues 200-211 are compositionally biased toward low complexity; it reads EAAPAPTPETGQ.

This sequence belongs to the bacterial ribosomal protein bL25 family. CTC subfamily. As to quaternary structure, part of the 50S ribosomal subunit; part of the 5S rRNA/L5/L18/L25 subcomplex. Contacts the 5S rRNA. Binds to the 5S rRNA independently of L5 and L18.

In terms of biological role, this is one of the proteins that binds to the 5S RNA in the ribosome where it forms part of the central protuberance. The polypeptide is Large ribosomal subunit protein bL25 (Desulforudis audaxviator (strain MP104C)).